We begin with the raw amino-acid sequence, 448 residues long: Phosphoglucosamine mutase (448 aa).

S100 functions as the Phosphoserine intermediate in the catalytic mechanism. Residues S100, D240, D242, and D244 each contribute to the Mg(2+) site. S100 carries the phosphoserine modification.

This sequence belongs to the phosphohexose mutase family. It depends on Mg(2+) as a cofactor. Post-translationally, activated by phosphorylation.

It catalyses the reaction alpha-D-glucosamine 1-phosphate = D-glucosamine 6-phosphate. Its function is as follows. Catalyzes the conversion of glucosamine-6-phosphate to glucosamine-1-phosphate. This Bacillus cytotoxicus (strain DSM 22905 / CIP 110041 / 391-98 / NVH 391-98) protein is Phosphoglucosamine mutase.